We begin with the raw amino-acid sequence, 517 residues long: Amidophosphoribosyltransferase (517 aa).

Methionine 1 is modified (N-acetylmethionine). The propeptide occupies 1 to 11; sequence MELEESGIREE. Residue cysteine 12 is the Nucleophile of the active site. One can recognise a Glutamine amidotransferase type-2 domain in the interval 12 to 261; sequence CGVFGCIASG…PGEIVEISRH (250 aa). [4Fe-4S] cluster is bound at residue cysteine 280. Serine 327, aspartate 389, and aspartate 390 together coordinate Mg(2+). [4Fe-4S] cluster-binding residues include cysteine 426, cysteine 503, and cysteine 506.

In the C-terminal section; belongs to the purine/pyrimidine phosphoribosyltransferase family. In terms of assembly, homotetramer. Mg(2+) serves as cofactor. Requires [4Fe-4S] cluster as cofactor. As to expression, expressed at a high level in brain, heart, liver and stomach.

It carries out the reaction 5-phospho-beta-D-ribosylamine + L-glutamate + diphosphate = 5-phospho-alpha-D-ribose 1-diphosphate + L-glutamine + H2O. It participates in purine metabolism; IMP biosynthesis via de novo pathway; N(1)-(5-phospho-D-ribosyl)glycinamide from 5-phospho-alpha-D-ribose 1-diphosphate: step 1/2. With respect to regulation, activated by the substrate 5-phospho-alpha-D-ribosyl-1-pyrophosphate and inhibited by the purine ribonucleotides, the end products of purine biosynthesis. In terms of biological role, catalyzes the formation of phosphoribosylamine from phosphoribosylpyrophosphate (PRPP) and glutamine. The polypeptide is Amidophosphoribosyltransferase (Ppat) (Rattus norvegicus (Rat)).